A 1228-amino-acid polypeptide reads, in one-letter code: MKKKKRSPLFRRLNYFSPIEHHSNKHSQTTREDRDWENVYRNRWQYDKVVRSTHGVNCTGSCSWNIYVKNGIVTWEGQNLNYPSTGPDMPDFEPRGCPRGASFSWYIYSPLRVKYPYVRGVLINLWREALQTHQNPLEAWKSIVENPEKAKSYKQARGKGGFVRAEWPEVLKLISASLLYTVMKYGPDRNVGFSPIPAMSMISHASGSRFMSLIGGPMLSFYDWYADLPPASPQIWGDQTDVPESSDWYNSGYIITWGSNVPLTRTPDAHFLAEARYKGAKVISISPDFAESSKFADDWLSIRQGTDGALAMAMGHVILQEFYVNQETERFIEYAKQYTDFPFLVTLSKENGVYTAGRFLHAKDIGRKTKHDQWKPAVWDEQTSSFAIPQGTMGSRWDGQQKWNLHMIDEETGEPIEPRLSVLGIEDEIGTVRIPYFSNDGNKVLERDLPIKKMNLNGEETYITTVFDLILANYGVNRGIGERSAVSYDDPEPFTPAWQEQMTGIKKEAVVKIAREFAQNAIDTDGRSMIIVGAGINHWFNSDTIYRAVLNLVLLVGAQGVNGGGWAHYVGQEKLRPAEGWQTIATAKDWEGVPKLQNGTSFFYFATDQWRYEDQPISDLASPIAASSRYKHHADYNVLAARLGWLPSYPTFNQNGIDLYKEAEKAGAATPEDVGAYVASQLQEKKLKFAIEDPDNEVNFPRNLFVWRANLISSSGKGHEYFLKHLLGTTNGLMNDDSDSIRPEEIKWREQAPEGKLDLLINLDFRMAGTALYSDIVLPAATWYEKHDLSSTDMHPFIHPFAPAISAPWESKSDWDIFKALSKAVSDLAEEVDMEPVKEVVATPLLHDTMQELAQPFGKINDWSKGECEAIPGKTMPNIQVVERDYKHIFHKMTALGPNVALKPSGTKGMSWSIADEYESLKQRLGEITSDSVAKGCPNISEAKQAAEAILTLSSTSNGKVAVKAWESLENITNLKLKDLAEEREEECFTFEQITAQPKTVITSPAFTGSEKGGRRYSPFTTNVEKLIPWRTLTGRQSYYVDHELMMEFGETMATFKPILQHRPFLSKRPDQEGKEIVLNYLTPHNKWSVHSMYFDSLPMLTLFRGGPTVWMNKDDAEDTDIKDNDWIECFNRNGVVVARAVLSHRIPKGMAFMHHAQDRHINVPGTKLTNNRGGTHNSPTRIHVKPTQMIGGYAQLSYGFNYYGPTGNQRDLNVVIRKLKEVDWLED.

The 4Fe-4S Mo/W bis-MGD-type domain occupies 47–111 (DKVVRSTHGV…SFSWYIYSPL (65 aa)). The [4Fe-4S] cluster site is built by His-54, Cys-58, Cys-62, and Cys-97. Asp-227 lines the Mo-bis(molybdopterin guanine dinucleotide) pocket.

The protein belongs to the prokaryotic molybdopterin-containing oxidoreductase family. It depends on [4Fe-4S] cluster as a cofactor. Mo-bis(molybdopterin guanine dinucleotide) serves as cofactor.

It is found in the cell membrane. The enzyme catalyses nitrate + a quinol = a quinone + nitrite + H2O. Its function is as follows. The alpha chain is the actual site of nitrate reduction. The sequence is that of Nitrate reductase alpha chain (narG) from Bacillus subtilis (strain 168).